The chain runs to 105 residues: Cytochrome c-553-like (105 aa).

The signal sequence occupies residues 1 to 29; it reads MAGIVSLVILAVALFSFMNFDPYVSQVLA. Residues C45, C48, H49, and M85 each contribute to the heme c site.

In terms of processing, binds 1 heme c group covalently per subunit.

The chain is Cytochrome c-553-like (cytM) from Synechocystis sp. (strain ATCC 27184 / PCC 6803 / Kazusa).